Consider the following 438-residue polypeptide: 23S rRNA (uracil(1939)-C(5))-methyltransferase RlmD (438 aa).

A TRAM domain is found at 8 to 68; that stretch reads KQKTNNVQTI…RQYGHATAKK (61 aa). The [4Fe-4S] cluster site is built by Cys81, Cys87, Cys90, and Cys168. 6 residues coordinate S-adenosyl-L-methionine: Gln271, Phe300, Asn305, Glu321, Asp348, and Asp369. Catalysis depends on Cys395, which acts as the Nucleophile.

The protein belongs to the class I-like SAM-binding methyltransferase superfamily. RNA M5U methyltransferase family. RlmD subfamily.

It catalyses the reaction uridine(1939) in 23S rRNA + S-adenosyl-L-methionine = 5-methyluridine(1939) in 23S rRNA + S-adenosyl-L-homocysteine + H(+). Catalyzes the formation of 5-methyl-uridine at position 1939 (m5U1939) in 23S rRNA. The protein is 23S rRNA (uracil(1939)-C(5))-methyltransferase RlmD of Haemophilus influenzae (strain 86-028NP).